The chain runs to 427 residues: MTWFIDRRLNGKNKSTVNRQRFLRRYKAQIKQSISEAINKRSVTDVDSGESVSIPTDDISEPMFHQGRGGLRHRVHPGNDHFIQNDRIERPQGGGGGSGSGQGQASQDGEGQDEFVFQISKDEYLDLLFEDLALPNLKKNQHRQLNEYKTHRAGFTSNGVPANISVVRSLQNSLARRTAMTAGKRRELHALETELETISHSEPAQLLEEERLRREIAELRAKIERVPFIDTFDLRYKNYEKRPEPSSQAVMFCLMDVSGSMDQATKDMAKRFYILLYLFLSRTYKNVEVVYIRHHTQAKEVDEHEFFYSQETGGTIVSSALKLMDEVVKERYDPGQWNIYAAQASDGDNWADDSPLCHEILAKKLLPVVRYYSYIEITRRAHQTLWREYEHLQATFDNFAMQHIRDQEDIYPVFRELFQKQSANQSA.

Residues 79–90 show a composition bias toward basic and acidic residues; that stretch reads NDHFIQNDRIER. Positions 79–110 are disordered; that stretch reads NDHFIQNDRIERPQGGGGGSGSGQGQASQDGE. A compositionally biased stretch (gly residues) spans 92–102; the sequence is QGGGGGSGSGQ.

This sequence belongs to the UPF0229 family.

This is UPF0229 protein YeaH from Salmonella paratyphi B (strain ATCC BAA-1250 / SPB7).